The primary structure comprises 124 residues: Large ribosomal subunit protein bL12 (124 aa).

It belongs to the bacterial ribosomal protein bL12 family. Homodimer. Part of the ribosomal stalk of the 50S ribosomal subunit. Forms a multimeric L10(L12)X complex, where L10 forms an elongated spine to which 2 to 4 L12 dimers bind in a sequential fashion. Binds GTP-bound translation factors.

Its function is as follows. Forms part of the ribosomal stalk which helps the ribosome interact with GTP-bound translation factors. Is thus essential for accurate translation. The protein is Large ribosomal subunit protein bL12 of Janthinobacterium sp. (strain Marseille) (Minibacterium massiliensis).